We begin with the raw amino-acid sequence, 185 residues long: Threonylcarbamoyl-AMP synthase (185 aa).

Positions 4-185 constitute a YrdC-like domain; sequence SFRVQQAARE…LATGEVVRPG (182 aa).

This sequence belongs to the SUA5 family. TsaC subfamily.

Its subcellular location is the cytoplasm. The catalysed reaction is L-threonine + hydrogencarbonate + ATP = L-threonylcarbamoyladenylate + diphosphate + H2O. Its function is as follows. Required for the formation of a threonylcarbamoyl group on adenosine at position 37 (t(6)A37) in tRNAs that read codons beginning with adenine. Catalyzes the conversion of L-threonine, HCO(3)(-)/CO(2) and ATP to give threonylcarbamoyl-AMP (TC-AMP) as the acyladenylate intermediate, with the release of diphosphate. This is Threonylcarbamoyl-AMP synthase from Pseudomonas putida (strain ATCC 700007 / DSM 6899 / JCM 31910 / BCRC 17059 / LMG 24140 / F1).